The following is a 173-amino-acid chain: Trafficking regulator of GLUT4 1 (173 aa).

The span at 1–10 shows a compositional bias: pro residues; the sequence is MANPAQPPLQ. The segment at 1-20 is disordered; sequence MANPAQPPLQDPGSTSPLEL. The Cytoplasmic portion of the chain corresponds to 1-102; that stretch reads MANPAQPPLQ…QDQEAPKDYL (102 aa). Phosphoserine is present on residues serine 16, serine 43, serine 45, serine 70, serine 84, and serine 85. The segment at residues 103–123 is an intramembrane region (helical); sequence VLAIASCFCPVWPLNLIPLIF. The Cytoplasmic segment spans residues 124 to 150; the sequence is SIMSRSSVQQGDLDGARRLGRLARLLS. A helical membrane pass occupies residues 151-171; that stretch reads ITFIILGIVIIIVAVTVNFTV. Residues 172-173 are Extracellular-facing; it reads PK.

It belongs to the CD225/Dispanin family. In terms of assembly, interacts with SLC2A4; the interaction is required for proper SLC2A4 reacycling after insulin stimulation. In terms of tissue distribution, expressed specifically in white and brown adipose tissues.

The protein resides in the cell membrane. It localises to the endomembrane system. It is found in the cytoplasm. Its subcellular location is the perinuclear region. Functionally, regulates insulin-mediated adipose tissue glucose uptake and transport by modulation of SLC2A4 recycling. Not required for SLC2A4 membrane fusion upon an initial stimulus, but rather is necessary for proper protein recycling during prolonged insulin stimulation. This is Trafficking regulator of GLUT4 1 (Trarg1) from Mus musculus (Mouse).